The following is a 377-amino-acid chain: TelA-like protein SSP1345 (377 aa).

The span at 1–18 shows a compositional bias: basic and acidic residues; sequence MAREQDSINSHPLDKYID. Residues 1-39 form a disordered region; it reads MAREQDSINSHPLDKYIDENSANESEIIKSSSQFSHEDQ. Polar residues predominate over residues 20–34; the sequence is NSANESEIIKSSSQF.

The protein belongs to the TelA family.

The chain is TelA-like protein SSP1345 from Staphylococcus saprophyticus subsp. saprophyticus (strain ATCC 15305 / DSM 20229 / NCIMB 8711 / NCTC 7292 / S-41).